Here is a 92-residue protein sequence, read N- to C-terminus: DNA-directed RNA polymerase subunit Rpo11 (92 aa).

This sequence belongs to the archaeal Rpo11/eukaryotic RPB11/RPC19 RNA polymerase subunit family. Part of the RNA polymerase complex.

Its subcellular location is the cytoplasm. The catalysed reaction is RNA(n) + a ribonucleoside 5'-triphosphate = RNA(n+1) + diphosphate. Functionally, DNA-dependent RNA polymerase (RNAP) catalyzes the transcription of DNA into RNA using the four ribonucleoside triphosphates as substrates. The chain is DNA-directed RNA polymerase subunit Rpo11 from Methanosarcina acetivorans (strain ATCC 35395 / DSM 2834 / JCM 12185 / C2A).